The primary structure comprises 172 residues: Large ribosomal subunit protein uL10 (172 aa).

Belongs to the universal ribosomal protein uL10 family. In terms of assembly, part of the ribosomal stalk of the 50S ribosomal subunit. The N-terminus interacts with L11 and the large rRNA to form the base of the stalk. The C-terminus forms an elongated spine to which L12 dimers bind in a sequential fashion forming a multimeric L10(L12)X complex.

Its function is as follows. Forms part of the ribosomal stalk, playing a central role in the interaction of the ribosome with GTP-bound translation factors. The protein is Large ribosomal subunit protein uL10 of Rhizobium leguminosarum bv. trifolii (strain WSM2304).